Consider the following 470-residue polypeptide: Synaptotagmin-17 (470 aa).

The tract at residues 54–112 (PPWLMASRSNDKDGDSVHTASDVPLTPRTNSPDGRRSSSDTSKSTYSLTRRISSLDSRR) is disordered. Residues 92-112 (SDTSKSTYSLTRRISSLDSRR) are compositionally biased toward low complexity. Residues serine 114 and serine 115 each carry the phosphoserine modification. C2 domains lie at 180-306 (QLGM…HWWK) and 317-451 (ELGE…EQWH).

Belongs to the synaptotagmin family.

The protein resides in the membrane. Functionally, plays a role in dendrite formation by melanocytes. This is Synaptotagmin-17 (Syt17) from Mus musculus (Mouse).